We begin with the raw amino-acid sequence, 254 residues long: NAD-dependent glycerol dehydrogenase (254 aa).

18–47 is an NAD(+) binding site; the sequence is VVTGAASGIGKAMAELFSEKGAYVVLLDIK. Residue Tyr-160 is the Proton acceptor of the active site. Lys-164 provides a ligand contact to NAD(+).

Belongs to the short-chain dehydrogenases/reductases (SDR) family. The cofactor is Mg(2+). Mn(2+) is required as a cofactor.

Its subcellular location is the cytoplasm. It catalyses the reaction glycerol + NAD(+) = dihydroxyacetone + NADH + H(+). Inhibited by Zn(2+). Its function is as follows. Involved in the glycerol metabolism. Catalyzes the NAD-dependent oxidation of glycerol to dihydroxyacetone (glycerone). GolD specifically uses NAD. This is NAD-dependent glycerol dehydrogenase from Listeria innocua serovar 6a (strain ATCC BAA-680 / CLIP 11262).